A 118-amino-acid chain; its full sequence is UPF0102 protein CMM_1377 (118 aa).

This sequence belongs to the UPF0102 family.

This chain is UPF0102 protein CMM_1377, found in Clavibacter michiganensis subsp. michiganensis (strain NCPPB 382).